A 385-amino-acid polypeptide reads, in one-letter code: Methionine aminopeptidase 1 (385 aa).

The C6H2-type zinc finger occupies 6–59 (SRVCETEGCSSEAKLQCPTCIKLGIQGSYFCSQECFKGSWATHKLLHKKAKDDK). Residues cysteine 9, cysteine 14, cysteine 22, cysteine 25, cysteine 36, cysteine 40, histidine 48, and histidine 52 each coordinate Zn(2+). Histidine 203 contributes to the a protein binding site. Positions 220, 231, and 294 each coordinate Zn(2+). Histidine 301 is an a protein binding site. Zn(2+) contacts are provided by glutamate 327 and glutamate 358.

It belongs to the peptidase M24A family. Methionine aminopeptidase type 1 subfamily. As to quaternary structure, associates with the 60S ribosomal subunit of the 80S translational complex. Requires Zn(2+) as cofactor. Co(2+) serves as cofactor. The cofactor is Mn(2+). Fe(2+) is required as a cofactor.

Its subcellular location is the cytoplasm. The enzyme catalyses Release of N-terminal amino acids, preferentially methionine, from peptides and arylamides.. In terms of biological role, cotranslationally removes the N-terminal methionine from nascent proteins. The N-terminal methionine is often cleaved when the second residue in the primary sequence is small and uncharged (Met-Ala-, Cys, Gly, Pro, Ser, Thr, or Val). The polypeptide is Methionine aminopeptidase 1 (metap1) (Xenopus laevis (African clawed frog)).